Consider the following 115-residue polypeptide: Large ribosomal subunit protein bL19 (115 aa).

The protein belongs to the bacterial ribosomal protein bL19 family.

In terms of biological role, this protein is located at the 30S-50S ribosomal subunit interface and may play a role in the structure and function of the aminoacyl-tRNA binding site. The polypeptide is Large ribosomal subunit protein bL19 (Streptococcus pyogenes serotype M49 (strain NZ131)).